The primary structure comprises 444 residues: Nuclear envelope integral membrane protein 1 (444 aa).

An N-terminal signal peptide occupies residues M1 to A43. N125 carries an N-linked (GlcNAc...) asparagine glycan. A run of 5 helical transmembrane segments spans residues P161–S181, F186–I206, P216–F236, C245–C265, and L289–A309. The interval F186–Q297 is a; required for its colocalization with lamins at the nuclear envelope. The interval P336 to E405 is b; required for interaction with RAN-GTP. The tract at residues P336 to T444 is required for nuclear localization. Phosphoserine is present on residues S368, S424, and S425.

This sequence belongs to the NEMP family. Homooligomer. Interacts with RAN-GTP. Interacts with EMD. Phosphorylation may regulate its interaction with RAN-GTP.

It localises to the nucleus inner membrane. The protein localises to the nucleus envelope. Functionally, together with EMD, contributes to nuclear envelope stiffness in germ cells. Required for female fertility. Essential for normal erythropoiesis. Required for efficient nuclear envelope opening and enucleation during the late stages of erythroblast maturation. The protein is Nuclear envelope integral membrane protein 1 (NEMP1) of Pongo abelii (Sumatran orangutan).